A 732-amino-acid chain; its full sequence is 1,4-alpha-glucan branching enzyme GlgB 2 (732 aa).

The active-site Nucleophile is D413. The active-site Proton donor is the E466.

Belongs to the glycosyl hydrolase 13 family. GlgB subfamily. Monomer.

The enzyme catalyses Transfers a segment of a (1-&gt;4)-alpha-D-glucan chain to a primary hydroxy group in a similar glucan chain.. It functions in the pathway glycan biosynthesis; glycogen biosynthesis. Its function is as follows. Catalyzes the formation of the alpha-1,6-glucosidic linkages in glycogen by scission of a 1,4-alpha-linked oligosaccharide from growing alpha-1,4-glucan chains and the subsequent attachment of the oligosaccharide to the alpha-1,6 position. In Rhizobium etli (strain ATCC 51251 / DSM 11541 / JCM 21823 / NBRC 15573 / CFN 42), this protein is 1,4-alpha-glucan branching enzyme GlgB 2.